Consider the following 316-residue polypeptide: Secondary metabolism regulator LAE1 (316 aa).

The protein belongs to the methyltransferase superfamily. LaeA methyltransferase family. Component of the heterotrimeric velvet complex composed of LAE1, VEL1 and VEL2; VEL1 acting as a bridging protein between LAE1 and VEL2. Interacts with VEL1.

It is found in the nucleus. The enzyme catalyses L-methionyl-[protein] + S-adenosyl-L-methionine = S-methyl-L-methionyl-[protein] + S-adenosyl-L-homocysteine. Functionally, methyltransferase that performs automethylation. No other methyl-accepting substrate has been identified yet. Component of the velvet transcription factor complex that acts as a global regulator for secondary metabolite gene expression. Controls the expression of the gibberellins gene clusters, but does not affect bikaverin production. Controls the expression of the fusaric acid gene cluster. Acts as a virulence factors during infection, most likely through activation of gibberellins biosynthesis. This chain is Secondary metabolism regulator LAE1, found in Gibberella fujikuroi (strain CBS 195.34 / IMI 58289 / NRRL A-6831) (Bakanae and foot rot disease fungus).